Reading from the N-terminus, the 73-residue chain is Small ribosomal subunit protein bS18 (73 aa).

It belongs to the bacterial ribosomal protein bS18 family. In terms of assembly, part of the 30S ribosomal subunit. Forms a tight heterodimer with protein bS6.

Binds as a heterodimer with protein bS6 to the central domain of the 16S rRNA, where it helps stabilize the platform of the 30S subunit. The sequence is that of Small ribosomal subunit protein bS18 from Prochlorococcus marinus (strain NATL2A).